A 422-amino-acid chain; its full sequence is Isocitrate dehydrogenase [NADP] (422 aa).

T94 provides a ligand contact to NADP(+). Residues S103, N105, R109, R119, and R143 each coordinate D-threo-isocitrate. D310 is a Mg(2+) binding site. Residues 344–350, N357, Y396, and R400 contribute to the NADP(+) site; that span reads HGTAPKY.

This sequence belongs to the isocitrate and isopropylmalate dehydrogenases family. As to quaternary structure, homodimer. It depends on Mg(2+) as a cofactor. Mn(2+) serves as cofactor.

The enzyme catalyses D-threo-isocitrate + NADP(+) = 2-oxoglutarate + CO2 + NADPH. Catalyzes the oxidative decarboxylation of isocitrate to 2-oxoglutarate and carbon dioxide with the concomitant reduction of NADP(+). In Staphylococcus aureus (strain MSSA476), this protein is Isocitrate dehydrogenase [NADP] (icd).